We begin with the raw amino-acid sequence, 521 residues long: MSDRVIIFDTTLRDGEQALPASLTVREKLQIALALERLGVDVMEVGFPVSSPGDFESVQTIARQIKNSRVCALSRALQKDIDAAAEALKVADQFRIHTFLATSTIHVESKLKKSFEDVLEMGINAVKYARRFTDDVEFSCEDAGRTPIDNLCRMVEAAINAGARTINIPDTVGYTIPSEFGGIIHNLFNRVPNIDKAVISVHCHDDLGLSVANSISAVQMGARQVECTINGIGERAGNTSLEEVAMILRTRQDLIGVHTNIKHQEIHRTSQLVSQLCNMPVQPNKAIVGANAFSHSSGIHQDGVLKAKNTYEIITPESVGLNQNTLNLTSRSGRHVIKHRLALLGYPEGSYDLDQIYTSFLQLADKKGQVFDYDLEALLFFSQIQEEPEHFKLNYLSVQSGGSIMATASVRMKVGDEEVTEAATGNGPVDAVYQCINRITGYEINISKYDLKSKGIGKDALGQVDIVAEFKGRKFHGMGLATDIVESSAQALVHVINNIYRALQVAEHKERFAQKTVMETL.

The 263-residue stretch at 5 to 267 (VIIFDTTLRD…HTNIKHQEIH (263 aa)) folds into the Pyruvate carboxyltransferase domain. Mn(2+) is bound by residues Asp14, His202, His204, and Asn238. Residues 392–521 (KLNYLSVQSG…FAQKTVMETL (130 aa)) are regulatory domain.

It belongs to the alpha-IPM synthase/homocitrate synthase family. LeuA type 1 subfamily. As to quaternary structure, homodimer. Mn(2+) serves as cofactor.

Its subcellular location is the cytoplasm. The catalysed reaction is 3-methyl-2-oxobutanoate + acetyl-CoA + H2O = (2S)-2-isopropylmalate + CoA + H(+). The protein operates within amino-acid biosynthesis; L-leucine biosynthesis; L-leucine from 3-methyl-2-oxobutanoate: step 1/4. Catalyzes the condensation of the acetyl group of acetyl-CoA with 3-methyl-2-oxobutanoate (2-ketoisovalerate) to form 3-carboxy-3-hydroxy-4-methylpentanoate (2-isopropylmalate). This chain is 2-isopropylmalate synthase, found in Tolumonas auensis (strain DSM 9187 / NBRC 110442 / TA 4).